A 93-amino-acid polypeptide reads, in one-letter code: Large ribosomal subunit protein bL27 (93 aa).

Positions 1-10 (MRFLLGLQYF) are excised as a propeptide. A disordered region spans residues 14-36 (KGVGSTKNGRDSESKRLGAKKSD). A compositionally biased stretch (basic and acidic residues) spans 21-36 (NGRDSESKRLGAKKSD).

This sequence belongs to the bacterial ribosomal protein bL27 family. Post-translationally, the N-terminus is cleaved by ribosomal processing cysteine protease Prp.

In Mycoplasma capricolum subsp. capricolum (strain California kid / ATCC 27343 / NCTC 10154), this protein is Large ribosomal subunit protein bL27.